A 245-amino-acid polypeptide reads, in one-letter code: MAAAIASSLIRQKRQAREREKSNACKCVSSPSKSKGNCEKNKLNVFSRVKLFGSKKRRRRRPEPQLKGIVTKLYSRQGYHLQLQPDGTIDGAKEEESSATVFNLIPVGLRVVAIQGVQTKLYLAMNSEGYLYTSEHFTPECKFKESVFENYYVTYSSMIYRQQHSGRSWFLGLNKEGEIMKGNHVKKNKPAAHFLPKPLKVAMYKEPSLHDLTEFSRSGSGTPTKSRSVSGVLNGGKSMSQNDST.

Disordered stretches follow at residues 1-37 and 213-245; these read MAAA…SKGN and TEFS…NDST. Residues 1–62 are mediates targeting to the nucleus; that stretch reads MAAAIASSLI…GSKKRRRRRP (62 aa). The span at 215–245 shows a compositional bias: polar residues; the sequence is FSRSGSGTPTKSRSVSGVLNGGKSMSQNDST.

Belongs to the heparin-binding growth factors family.

It localises to the cell projection. The protein resides in the filopodium. It is found in the growth cone. Its subcellular location is the dendrite. The protein localises to the cell membrane. It localises to the sarcolemma. The protein resides in the cytoplasm. Microtubule-binding protein which directly binds tubulin and is involved in both polymerization and stabilization of microtubules. Through its action on microtubules, may participate in the refinement of axons by negatively regulating axonal and leading processes branching. Plays a crucial role in neuron polarization and migration. Regulates voltage-gated sodium channel transport and function. Required for proper head development, it is involved in neural differentiation through regulation of the mek5-erk5 pathway. The protein is Fibroblast growth factor 13 (fgf13) of Xenopus laevis (African clawed frog).